The primary structure comprises 54 residues: UPF0391 membrane protein Rmet_0093 (54 aa).

Helical transmembrane passes span 5 to 25 and 30 to 50; these read ALVFFIVALIAAIFGFGGIAA and IAKILFLIFLVVAIVTFVMGL.

It belongs to the UPF0391 family.

Its subcellular location is the cell membrane. The chain is UPF0391 membrane protein Rmet_0093 from Cupriavidus metallidurans (strain ATCC 43123 / DSM 2839 / NBRC 102507 / CH34) (Ralstonia metallidurans).